A 303-amino-acid polypeptide reads, in one-letter code: MDALELKNIISDGLLSFPVTDFDQNGDFNKSSYAKRLEWLAPYGASALFAAGGTGEFFSLTGNEYSEVIKTAVDTCKGSVPIIAGAGGPTRQAIEQAKEAERLGAHGILLMPHYLTEASQEGLIEHVKQVCNSVDFGVIFYNRSVSRLNLDSIQKLTEMCPNLIGFKDSSGQIDMMTAVTQTIGDRLSYLGGLPTAEVFAAPYKALGCPVYSSAVFNFIPKTAMEFYNALRSDDFETTNRLIKDFFLPLIKIRDRKSGYAVSMIKAGAKIVGHDAGPVRPPLSDLTQADYEDLAALIATLGPQ.

It belongs to the DapA family.

The catalysed reaction is 5-dehydro-4-deoxy-D-glucarate + H(+) = 2,5-dioxopentanoate + CO2 + H2O. It participates in carbohydrate acid metabolism; D-glucarate degradation; 2,5-dioxopentanoate from D-glucarate: step 2/2. The polypeptide is Probable 5-dehydro-4-deoxyglucarate dehydratase (Acinetobacter baumannii (strain ATCC 17978 / DSM 105126 / CIP 53.77 / LMG 1025 / NCDC KC755 / 5377)).